An 89-amino-acid chain; its full sequence is uncharacterized protein (89 aa).

This sequence to Synechocystis PCC 6803 slr1025.

This is an uncharacterized protein from Ureaplasma parvum serovar 3 (strain ATCC 700970).